We begin with the raw amino-acid sequence, 285 residues long: MEMO1 family protein Igni_0992 (285 aa).

This sequence belongs to the MEMO1 family.

In Ignicoccus hospitalis (strain KIN4/I / DSM 18386 / JCM 14125), this protein is MEMO1 family protein Igni_0992.